Here is a 351-residue protein sequence, read N- to C-terminus: Signal recognition particle receptor FtsY (351 aa).

GTP-binding positions include 156–163 (GINGTGKT), 238–242 (DTAGR), and 302–305 (TKLD).

This sequence belongs to the GTP-binding SRP family. FtsY subfamily. In terms of assembly, part of the signal recognition particle protein translocation system, which is composed of SRP and FtsY. SRP is a ribonucleoprotein composed of Ffh and a 4.5S RNA molecule.

The protein resides in the cell membrane. It localises to the cytoplasm. It carries out the reaction GTP + H2O = GDP + phosphate + H(+). Functionally, involved in targeting and insertion of nascent membrane proteins into the cytoplasmic membrane. Acts as a receptor for the complex formed by the signal recognition particle (SRP) and the ribosome-nascent chain (RNC). Interaction with SRP-RNC leads to the transfer of the RNC complex to the Sec translocase for insertion into the membrane, the hydrolysis of GTP by both Ffh and FtsY, and the dissociation of the SRP-FtsY complex into the individual components. In Buchnera aphidicola subsp. Schizaphis graminum (strain Sg), this protein is Signal recognition particle receptor FtsY.